The primary structure comprises 176 residues: Ribosome maturation factor RimM (176 aa).

In terms of domain architecture, PRC barrel spans 100–173 (KDEYHYHDLI…WLLINPPPGL (74 aa)).

It belongs to the RimM family. Binds ribosomal protein uS19.

The protein localises to the cytoplasm. In terms of biological role, an accessory protein needed during the final step in the assembly of 30S ribosomal subunit, possibly for assembly of the head region. Essential for efficient processing of 16S rRNA. May be needed both before and after RbfA during the maturation of 16S rRNA. It has affinity for free ribosomal 30S subunits but not for 70S ribosomes. The protein is Ribosome maturation factor RimM of Prochlorococcus marinus (strain NATL1A).